A 583-amino-acid chain; its full sequence is Interactor of constitutive active ROPs 2, chloroplastic (583 aa).

Residues 1 to 55 (MQTPKPRPGSLEVPQKKSPASTPKTARKLKTSESDPVSSPNTKIRTPKTQSPKVV) constitute a chloroplast transit peptide. Disordered stretches follow at residues 1 to 80 (MQTP…PELA) and 101 to 125 (EALK…NASE). Positions 34 to 52 (SDPVSSPNTKIRTPKTQSP) are enriched in polar residues. 2 coiled-coil regions span residues 74–207 (GKTP…DAKE) and 238–516 (MKMS…AAAT). Basic and acidic residues predominate over residues 102–115 (ALKKEAQDQAEETK). The tract at residues 518-583 (LSGGNNNNNS…IGVLLKKSQK (66 aa)) is disordered. The segment covering 519 to 529 (SGGNNNNNSNG) has biased composition (low complexity). Residue Ser540 is modified to Phosphoserine.

Belongs to the ICR family. In terms of assembly, interacts with ARAC8, ARAC11 and KIN13A in vitro, but not with ICR1 or SEC3A.

The protein localises to the plastid. Its subcellular location is the chloroplast. Its function is as follows. Acts as a scaffold, mediating interaction of ROPs with different proteins. The chain is Interactor of constitutive active ROPs 2, chloroplastic (ICR2) from Arabidopsis thaliana (Mouse-ear cress).